Reading from the N-terminus, the 273-residue chain is 1,4-dihydroxy-2-naphthoyl-CoA synthase (273 aa).

Substrate contacts are provided by residues arginine 34, 73 to 77, tyrosine 85, 117 to 121, threonine 143, serine 149, tyrosine 246, and lysine 261; these read SGGDQ and YAVGG. 142-144 contacts hydrogencarbonate; sequence QTG. The segment covering 254 to 265 has biased composition (basic and acidic residues); that stretch reads GRDAFKEKRDPD. The segment at 254–273 is disordered; it reads GRDAFKEKRDPDFDQFPKFP.

This sequence belongs to the enoyl-CoA hydratase/isomerase family. MenB subfamily. It depends on hydrogencarbonate as a cofactor.

It carries out the reaction 2-succinylbenzoyl-CoA + H(+) = 1,4-dihydroxy-2-naphthoyl-CoA + H2O. It functions in the pathway quinol/quinone metabolism; 1,4-dihydroxy-2-naphthoate biosynthesis; 1,4-dihydroxy-2-naphthoate from chorismate: step 6/7. The protein operates within quinol/quinone metabolism; menaquinone biosynthesis. Converts o-succinylbenzoyl-CoA (OSB-CoA) to 1,4-dihydroxy-2-naphthoyl-CoA (DHNA-CoA). This is 1,4-dihydroxy-2-naphthoyl-CoA synthase from Staphylococcus aureus (strain MSSA476).